Reading from the N-terminus, the 217-residue chain is Small ribosomal subunit protein uS3 (217 aa).

A KH type-2 domain is found at 38-106 (IRKFVQKELA…QVHINIIEIK (69 aa)).

Belongs to the universal ribosomal protein uS3 family. Part of the 30S ribosomal subunit. Forms a tight complex with proteins S10 and S14.

Its function is as follows. Binds the lower part of the 30S subunit head. Binds mRNA in the 70S ribosome, positioning it for translation. In Streptococcus gordonii (strain Challis / ATCC 35105 / BCRC 15272 / CH1 / DL1 / V288), this protein is Small ribosomal subunit protein uS3.